Consider the following 61-residue polypeptide: Small ribosomal subunit protein uS14 (61 aa).

Zn(2+) contacts are provided by Cys24, Cys27, Cys40, and Cys43.

It belongs to the universal ribosomal protein uS14 family. Zinc-binding uS14 subfamily. In terms of assembly, part of the 30S ribosomal subunit. Contacts proteins S3 and S10. Requires Zn(2+) as cofactor.

Binds 16S rRNA, required for the assembly of 30S particles and may also be responsible for determining the conformation of the 16S rRNA at the A site. This is Small ribosomal subunit protein uS14 from Acidithiobacillus ferrooxidans (strain ATCC 23270 / DSM 14882 / CIP 104768 / NCIMB 8455) (Ferrobacillus ferrooxidans (strain ATCC 23270)).